The following is a 403-amino-acid chain: Acetate kinase (403 aa).

Mg(2+) is bound at residue Asn-9. Lys-16 contacts ATP. Substrate is bound at residue Arg-93. Residue Asp-150 is the Proton donor/acceptor of the active site. Residues His-210–Gly-214, Asp-284–Arg-286, and Gly-332–Asn-336 each bind ATP. Residue Glu-388 coordinates Mg(2+).

This sequence belongs to the acetokinase family. Homodimer. The cofactor is Mg(2+). Mn(2+) is required as a cofactor.

It localises to the cytoplasm. The catalysed reaction is acetate + ATP = acetyl phosphate + ADP. Its pathway is metabolic intermediate biosynthesis; acetyl-CoA biosynthesis; acetyl-CoA from acetate: step 1/2. Its function is as follows. Catalyzes the formation of acetyl phosphate from acetate and ATP. Can also catalyze the reverse reaction. This is Acetate kinase from Corynebacterium jeikeium (strain K411).